The primary structure comprises 607 residues: Elongation factor 4 (607 aa).

Positions 11-193 (SKIRNFSIIA…QIVEKVPAPT (183 aa)) constitute a tr-type G domain. GTP contacts are provided by residues 23-28 (DHGKST) and 140-143 (NKID).

The protein belongs to the TRAFAC class translation factor GTPase superfamily. Classic translation factor GTPase family. LepA subfamily.

Its subcellular location is the cell membrane. The catalysed reaction is GTP + H2O = GDP + phosphate + H(+). In terms of biological role, required for accurate and efficient protein synthesis under certain stress conditions. May act as a fidelity factor of the translation reaction, by catalyzing a one-codon backward translocation of tRNAs on improperly translocated ribosomes. Back-translocation proceeds from a post-translocation (POST) complex to a pre-translocation (PRE) complex, thus giving elongation factor G a second chance to translocate the tRNAs correctly. Binds to ribosomes in a GTP-dependent manner. The chain is Elongation factor 4 from Bacillus mycoides (strain KBAB4) (Bacillus weihenstephanensis).